A 253-amino-acid chain; its full sequence is Glucosamine-6-phosphate deaminase (253 aa).

Aspartate 65 serves as the catalytic Proton acceptor; for enolization step. Catalysis depends on asparagine 133, which acts as the For ring-opening step. Residue histidine 135 is the Proton acceptor; for ring-opening step of the active site. Glutamate 140 serves as the catalytic For ring-opening step.

It belongs to the glucosamine/galactosamine-6-phosphate isomerase family. NagB subfamily.

The catalysed reaction is alpha-D-glucosamine 6-phosphate + H2O = beta-D-fructose 6-phosphate + NH4(+). It functions in the pathway amino-sugar metabolism; N-acetylneuraminate degradation; D-fructose 6-phosphate from N-acetylneuraminate: step 5/5. Functionally, catalyzes the reversible isomerization-deamination of glucosamine 6-phosphate (GlcN6P) to form fructose 6-phosphate (Fru6P) and ammonium ion. The polypeptide is Glucosamine-6-phosphate deaminase (Corynebacterium glutamicum (strain R)).